A 972-amino-acid chain; its full sequence is mRNA transport regulator MTR10 (972 aa).

The protein resides in the nucleus. Involved in mRNA transport from nucleus to cytoplasm. The protein is mRNA transport regulator MTR10 (MTR10) of Saccharomyces cerevisiae (strain ATCC 204508 / S288c) (Baker's yeast).